Reading from the N-terminus, the 457-residue chain is Serine/threonine-protein phosphatase 2A regulatory subunit B'' subunit gamma (457 aa).

EF-hand domains follow at residues P276–S311 and K344–Q379. Residues D289, D291, N293, M295, and E300 each contribute to the Ca(2+) site.

It is found in the nucleus. Its subcellular location is the cytoplasm. Possible role in the regulation of cell death. This Danio rerio (Zebrafish) protein is Serine/threonine-protein phosphatase 2A regulatory subunit B'' subunit gamma (ppp2r3c).